Reading from the N-terminus, the 92-residue chain is Small ribosomal subunit protein uS19 (92 aa).

This sequence belongs to the universal ribosomal protein uS19 family.

In terms of biological role, protein S19 forms a complex with S13 that binds strongly to the 16S ribosomal RNA. This chain is Small ribosomal subunit protein uS19, found in Crocosphaera subtropica (strain ATCC 51142 / BH68) (Cyanothece sp. (strain ATCC 51142)).